A 160-amino-acid chain; its full sequence is Epithelial membrane protein 1 (160 aa).

Residues M1 to V21 traverse the membrane as a helical segment. N-linked (GlcNAc...) asparagine glycosylation is found at N35 and N43. 3 helical membrane passes run F67–F87, F95–I115, and F137–L157.

The protein belongs to the PMP-22/EMP/MP20 family. Most abundant in squamous epithelia.

Its subcellular location is the membrane. The sequence is that of Epithelial membrane protein 1 (EMP1) from Oryctolagus cuniculus (Rabbit).